Reading from the N-terminus, the 57-residue chain is uncharacterized protein (57 aa).

This is an uncharacterized protein from His1 virus (isolate Australia/Victoria) (His1V).